Reading from the N-terminus, the 84-residue chain is M-zodatoxin-Lt2a (84 aa).

A signal peptide spans 1–22 (MKYFVIALALAVALVCIAESTA). The propeptide occupies 23-58 (YEVNEELENELDDLDDAAWLAVAEELQGLEDFEESR). A Processing quadruplet motif motif is present at residues 55–58 (EESR).

Post-translationally, cleavage of the propeptide depends on the processing quadruplet motif (XXXR, with at least one of X being E). In terms of tissue distribution, expressed by the venom gland.

It is found in the secreted. It has antimicrobial activity against Gram-positive bacteria (A.globiformis VKM Ac-1112 (MIC=0.7 uM), and B.subtilis VKM B-501 (MIC=0.4 uM)), Gram-negative bacteria (E.coli DH5-alpha (MIC=1.0 uM), E.coli MH1 (MIC=0.7 uM), and P.aeruginosa PAO1 (MIC=6.7 uM)), and yeasts (P.pastoris GS115 (MIC=6.7 uM), and S.cerevisiae Y190 (MIC=54 uM)). Also has a strong hemolytic activity against rabbit erythrocytes. Causes paralysis, but is not lethal when injected into insect (M.domestica) larvae. The sequence is that of M-zodatoxin-Lt2a from Lachesana tarabaevi (Spider).